Reading from the N-terminus, the 348-residue chain is Phospho-2-dehydro-3-deoxyheptonate aldolase, Trp-sensitive (348 aa).

It belongs to the class-I DAHP synthase family.

The enzyme catalyses D-erythrose 4-phosphate + phosphoenolpyruvate + H2O = 7-phospho-2-dehydro-3-deoxy-D-arabino-heptonate + phosphate. Its pathway is metabolic intermediate biosynthesis; chorismate biosynthesis; chorismate from D-erythrose 4-phosphate and phosphoenolpyruvate: step 1/7. In terms of biological role, stereospecific condensation of phosphoenolpyruvate (PEP) and D-erythrose-4-phosphate (E4P) giving rise to 3-deoxy-D-arabino-heptulosonate-7-phosphate (DAHP). This chain is Phospho-2-dehydro-3-deoxyheptonate aldolase, Trp-sensitive (aroH), found in Enterobacter agglomerans (Erwinia herbicola).